The chain runs to 1048 residues: Anguibactin system regulator (1048 aa).

A Carrier domain is found at 965-1039 (PIITASEDRV…AFAIIMDRCR (75 aa)).

The protein belongs to the ATP-dependent AMP-binding enzyme family.

Its pathway is siderophore biosynthesis; anguibactin biosynthesis. Bifunctional protein that plays an essential role in virulence. Plays a role in both the production of the siderophore anguibactin and the regulation of iron transport genes. The protein is Anguibactin system regulator (angR) of Vibrio anguillarum (Listonella anguillarum).